The following is a 318-amino-acid chain: tRNA pseudouridine synthase B (318 aa).

D47 serves as the catalytic Nucleophile.

It belongs to the pseudouridine synthase TruB family. Type 1 subfamily.

The enzyme catalyses uridine(55) in tRNA = pseudouridine(55) in tRNA. Its function is as follows. Responsible for synthesis of pseudouridine from uracil-55 in the psi GC loop of transfer RNAs. The polypeptide is tRNA pseudouridine synthase B (Aliivibrio salmonicida (strain LFI1238) (Vibrio salmonicida (strain LFI1238))).